The following is a 189-amino-acid chain: Peptidyl-tRNA hydrolase (189 aa).

His19 (proton acceptor) is an active-site residue. 3 residues coordinate tRNA: Tyr64, Asn66, and Asn112.

The protein belongs to the PTH family. As to quaternary structure, monomer.

It is found in the cytoplasm. The catalysed reaction is an N-acyl-L-alpha-aminoacyl-tRNA + H2O = an N-acyl-L-amino acid + a tRNA + H(+). Functionally, hydrolyzes ribosome-free peptidyl-tRNAs (with 1 or more amino acids incorporated), which drop off the ribosome during protein synthesis, or as a result of ribosome stalling. In terms of biological role, catalyzes the release of premature peptidyl moieties from peptidyl-tRNA molecules trapped in stalled 50S ribosomal subunits, and thus maintains levels of free tRNAs and 50S ribosomes. In Gluconobacter oxydans (strain 621H) (Gluconobacter suboxydans), this protein is Peptidyl-tRNA hydrolase.